Here is a 549-residue protein sequence, read N- to C-terminus: Glucose-6-phosphate isomerase (549 aa).

Residue glutamate 353 is the Proton donor of the active site. Active-site residues include histidine 384 and lysine 510.

It belongs to the GPI family.

It is found in the cytoplasm. The catalysed reaction is alpha-D-glucose 6-phosphate = beta-D-fructose 6-phosphate. The protein operates within carbohydrate biosynthesis; gluconeogenesis. It participates in carbohydrate degradation; glycolysis; D-glyceraldehyde 3-phosphate and glycerone phosphate from D-glucose: step 2/4. Catalyzes the reversible isomerization of glucose-6-phosphate to fructose-6-phosphate. This is Glucose-6-phosphate isomerase from Mycolicibacterium smegmatis (strain ATCC 700084 / mc(2)155) (Mycobacterium smegmatis).